We begin with the raw amino-acid sequence, 146 residues long: Catabolic 3-dehydroquinase (146 aa).

Tyrosine 24 functions as the Proton acceptor in the catalytic mechanism. The substrate site is built by asparagine 78, histidine 84, and aspartate 91. Histidine 104 functions as the Proton donor in the catalytic mechanism. Substrate is bound by residues 105 to 106 (IT) and arginine 115.

The protein belongs to the type-II 3-dehydroquinase family. In terms of assembly, homododecamer. Adopts a ring-like structure, composed of an arrangement of two hexameric rings stacked on top of one another.

The catalysed reaction is 3-dehydroquinate = 3-dehydroshikimate + H2O. The protein operates within aromatic compound metabolism; 3,4-dihydroxybenzoate biosynthesis; 3,4-dihydroxybenzoate from 3-dehydroquinate: step 1/2. Functionally, is involved in the catabolism of quinate. Allows the utilization of quinate as carbon source via the beta-ketoadipate pathway. In Meyerozyma guilliermondii (strain ATCC 6260 / CBS 566 / DSM 6381 / JCM 1539 / NBRC 10279 / NRRL Y-324) (Yeast), this protein is Catabolic 3-dehydroquinase.